The following is a 736-amino-acid chain: Glycogen [starch] synthase, muscle (736 aa).

At Ser-8 the chain carries Phosphoserine; by AMPK and PKA. Ser-11 carries the phosphoserine modification. Lys-39 provides a ligand contact to UDP. UDP-alpha-D-glucose-binding residues include His-205 and Arg-211. His-291, Glu-292, Gln-294, His-297, and Lys-301 together coordinate alpha-D-glucose 6-phosphate. Arg-331 is a binding site for UDP. Residue Arg-331 coordinates UDP-alpha-D-glucose. The residue at position 412 (Ser-412) is a Phosphoserine. His-501 is a binding site for alpha-D-glucose 6-phosphate. Positions 510, 512, and 513 each coordinate UDP-alpha-D-glucose. Residue Thr-515 coordinates UDP. Residues Arg-582 and Arg-586 each coordinate alpha-D-glucose 6-phosphate. The disordered stretch occupies residues 631-736; sequence TQGYRYPRPA…PASSLGEERN (106 aa). Ser-641 is modified (phosphoserine; by DYRK2, GSK3-alpha, GSK3-beta and PASK). 2 positions are modified to phosphoserine; by GSK3-alpha and GSK3-beta: Ser-645 and Ser-649. Ser-652 is modified (phosphoserine). Ser-653 bears the Phosphoserine; by GSK3-alpha and GSK3-beta mark. Ser-657 carries the post-translational modification Phosphoserine; by CK2. The segment covering 658 to 681 has biased composition (acidic residues); the sequence is EDEEEPRDLPPDEDDERYDEDEEA. A compositionally biased stretch (basic and acidic residues) spans 682-695; that stretch reads AKDRRNIRAPEWPR. Ser-698 is subject to Phosphoserine. The residue at position 700 (Thr-700) is a Phosphothreonine. Ser-709 bears the Phosphoserine mark. Residues 714–727 show a composition bias toward low complexity; that stretch reads PSSSVSTPSEPLSP. Thr-720 is subject to Phosphothreonine. Residues Ser-726 and Ser-730 each carry the phosphoserine modification.

It belongs to the glycosyltransferase 3 family. As to quaternary structure, part of the GYS1-GYG1 complex, a heterooctamer composed of a tetramer of GYS1 and 2 dimers of GYG1, where each GYS1 protomer binds to one GYG1 subunit (via GYG1 C-terminus); the GYS1 tetramer may dissociate from GYG1 dimers to continue glycogen polymerization on its own. Phosphorylation at Ser-8 by AMPK inactivates the enzyme activity. Primed phosphorylation at Ser-657 (site 5) by CSNK2A1 and CSNK2A2 is required for inhibitory phosphorylation at Ser-641 (site 3a), Ser-645 (site 3b), Ser-649 (site 3c) and Ser-653 (site 4) by GSK3A an GSK3B. Phosphorylated at Ser-641 by PASK, leading to inactivation; phosphorylation by PASK is inhibited by glycogen. Phosphorylated at Ser-641 by DYRK2, leading to inactivation. Dephosphorylation at Ser-641 and Ser-645 by PP1 activates the enzyme.

The enzyme catalyses [(1-&gt;4)-alpha-D-glucosyl](n) + UDP-alpha-D-glucose = [(1-&gt;4)-alpha-D-glucosyl](n+1) + UDP + H(+). It participates in glycan biosynthesis; glycogen biosynthesis. Its activity is regulated as follows. Allosteric activation by glucose-6-phosphate. Phosphorylation reduces the activity towards UDP-glucose. When in the non-phosphorylated state, glycogen synthase does not require glucose-6-phosphate as an allosteric activator; when phosphorylated it does. In terms of biological role, glycogen synthase participates in the glycogen biosynthetic process along with glycogenin and glycogen branching enzyme. Extends the primer composed of a few glucose units formed by glycogenin by adding new glucose units to it. In this context, glycogen synthase transfers the glycosyl residue from UDP-Glc to the non-reducing end of alpha-1,4-glucan. The polypeptide is Glycogen [starch] synthase, muscle (GYS1) (Bos taurus (Bovine)).